The primary structure comprises 503 residues: Aspartyl/glutamyl-tRNA(Asn/Gln) amidotransferase subunit B (503 aa).

It belongs to the GatB/GatE family. GatB subfamily. In terms of assembly, heterotrimer of A, B and C subunits.

The catalysed reaction is L-glutamyl-tRNA(Gln) + L-glutamine + ATP + H2O = L-glutaminyl-tRNA(Gln) + L-glutamate + ADP + phosphate + H(+). The enzyme catalyses L-aspartyl-tRNA(Asn) + L-glutamine + ATP + H2O = L-asparaginyl-tRNA(Asn) + L-glutamate + ADP + phosphate + 2 H(+). Allows the formation of correctly charged Asn-tRNA(Asn) or Gln-tRNA(Gln) through the transamidation of misacylated Asp-tRNA(Asn) or Glu-tRNA(Gln) in organisms which lack either or both of asparaginyl-tRNA or glutaminyl-tRNA synthetases. The reaction takes place in the presence of glutamine and ATP through an activated phospho-Asp-tRNA(Asn) or phospho-Glu-tRNA(Gln). The polypeptide is Aspartyl/glutamyl-tRNA(Asn/Gln) amidotransferase subunit B (Roseobacter denitrificans (strain ATCC 33942 / OCh 114) (Erythrobacter sp. (strain OCh 114))).